A 122-amino-acid chain; its full sequence is Large ribosomal subunit protein uL14 (122 aa).

This sequence belongs to the universal ribosomal protein uL14 family. Part of the 50S ribosomal subunit. Forms a cluster with proteins L3 and L19. In the 70S ribosome, L14 and L19 interact and together make contacts with the 16S rRNA in bridges B5 and B8.

Functionally, binds to 23S rRNA. Forms part of two intersubunit bridges in the 70S ribosome. The sequence is that of Large ribosomal subunit protein uL14 from Chlorobaculum tepidum (strain ATCC 49652 / DSM 12025 / NBRC 103806 / TLS) (Chlorobium tepidum).